We begin with the raw amino-acid sequence, 185 residues long: Ribosome-recycling factor (185 aa).

Residues 143-163 form a disordered region; it reads EKEKLISEDDNKKGMDDIQKE.

It belongs to the RRF family.

It localises to the cytoplasm. Its function is as follows. Responsible for the release of ribosomes from messenger RNA at the termination of protein biosynthesis. May increase the efficiency of translation by recycling ribosomes from one round of translation to another. This Syntrophomonas wolfei subsp. wolfei (strain DSM 2245B / Goettingen) protein is Ribosome-recycling factor.